We begin with the raw amino-acid sequence, 356 residues long: tRNA N6-adenosine threonylcarbamoyltransferase (356 aa).

His-115 and His-119 together coordinate Fe cation. Substrate contacts are provided by residues 138-142 (LVSGG), Asp-171, Gly-184, and Asn-283. Residue Asp-311 coordinates Fe cation.

It belongs to the KAE1 / TsaD family. It depends on Fe(2+) as a cofactor.

It localises to the cytoplasm. The catalysed reaction is L-threonylcarbamoyladenylate + adenosine(37) in tRNA = N(6)-L-threonylcarbamoyladenosine(37) in tRNA + AMP + H(+). In terms of biological role, required for the formation of a threonylcarbamoyl group on adenosine at position 37 (t(6)A37) in tRNAs that read codons beginning with adenine. Is involved in the transfer of the threonylcarbamoyl moiety of threonylcarbamoyl-AMP (TC-AMP) to the N6 group of A37, together with TsaE and TsaB. TsaD likely plays a direct catalytic role in this reaction. This chain is tRNA N6-adenosine threonylcarbamoyltransferase, found in Synechococcus sp. (strain WH7803).